A 238-amino-acid chain; its full sequence is Aliphatic sulfonates import ATP-binding protein SsuB (238 aa).

The 215-residue stretch at 7–221 folds into the ABC transporter domain; it reads VSLHQVHQQF…RPGDAAFASL (215 aa). An ATP-binding site is contributed by 39-46; it reads GRSGSGKT.

Belongs to the ABC transporter superfamily. Aliphatic sulfonates importer (TC 3.A.1.17.2) family. The complex is composed of two ATP-binding proteins (SsuB), two transmembrane proteins (SsuC) and a solute-binding protein (SsuA).

The protein resides in the cell inner membrane. It catalyses the reaction ATP + H2O + aliphatic sulfonate-[sulfonate-binding protein]Side 1 = ADP + phosphate + aliphatic sulfonateSide 2 + [sulfonate-binding protein]Side 1.. Its function is as follows. Part of the ABC transporter complex SsuABC involved in aliphatic sulfonates import. Responsible for energy coupling to the transport system. This Granulibacter bethesdensis (strain ATCC BAA-1260 / CGDNIH1) protein is Aliphatic sulfonates import ATP-binding protein SsuB.